Here is a 145-residue protein sequence, read N- to C-terminus: Peptide methionine sulfoxide reductase MsrB (145 aa).

The 124-residue stretch at Lys6–Val129 folds into the MsrB domain. Cys118 functions as the Nucleophile in the catalytic mechanism.

It belongs to the MsrB Met sulfoxide reductase family.

It catalyses the reaction L-methionyl-[protein] + [thioredoxin]-disulfide + H2O = L-methionyl-(R)-S-oxide-[protein] + [thioredoxin]-dithiol. The chain is Peptide methionine sulfoxide reductase MsrB from Listeria monocytogenes serotype 4a (strain HCC23).